The primary structure comprises 740 residues: NAD(P)H-quinone oxidoreductase subunit 5, chloroplastic (740 aa).

Transmembrane regions (helical) follow at residues 9–29 (WIIP…LILF), 40–60 (WAFQ…YLSI), 89–109 (IDPL…MVLI), 125–145 (FAYM…SNLI), 147–167 (IYIF…FWFT), 185–205 (GDFG…SFEF), 219–239 (NEVD…GAVA), 258–278 (TPIS…FLVA), 286–306 (VIPY…LLGA), 327–347 (LGYM…FHLI), 354–374 (ALLF…VGYS), 396–416 (ITFL…CFWS), 425–445 (WLYS…TAFY), 543–563 (LFPI…GIPF), 602–622 (VLSV…YKPI), and 717–737 (SYLF…YLLF).

It belongs to the complex I subunit 5 family. In terms of assembly, NDH is composed of at least 16 different subunits, 5 of which are encoded in the nucleus.

It localises to the plastid. Its subcellular location is the chloroplast thylakoid membrane. It carries out the reaction a plastoquinone + NADH + (n+1) H(+)(in) = a plastoquinol + NAD(+) + n H(+)(out). The catalysed reaction is a plastoquinone + NADPH + (n+1) H(+)(in) = a plastoquinol + NADP(+) + n H(+)(out). Functionally, NDH shuttles electrons from NAD(P)H:plastoquinone, via FMN and iron-sulfur (Fe-S) centers, to quinones in the photosynthetic chain and possibly in a chloroplast respiratory chain. The immediate electron acceptor for the enzyme in this species is believed to be plastoquinone. Couples the redox reaction to proton translocation, and thus conserves the redox energy in a proton gradient. This chain is NAD(P)H-quinone oxidoreductase subunit 5, chloroplastic (ndhF), found in Nicotiana tomentosiformis (Tobacco).